Reading from the N-terminus, the 337-residue chain is Cytoskeleton protein RodZ (337 aa).

Residues 1 to 111 (MNTEATHDQN…LGKRRKKRDG (111 aa)) are Cytoplasmic-facing. Residues 19–71 (LRNAREQLGLSQQAVAERLCLKVSTVRDIEEDKAPADLASTFLRGYIRSYARL) form the HTH cro/C1-type domain. A DNA-binding region (H-T-H motif) is located at residues 30–49 (QQAVAERLCLKVSTVRDIEE). The chain crosses the membrane as a helical; Signal-anchor for type II membrane protein span at residues 112 to 132 (WLMTFTWLVLFVVIGLSGAWW). Over 133–337 (WQDHKAQQEE…TLNAEQSPAQ (205 aa)) the chain is Periplasmic. Positions 145–167 (TMADQSSAELSSNSEQGQSVPLN) are enriched in polar residues. A disordered region spans residues 145 to 235 (TMADQSSAEL…PTAATTPDGA (91 aa)). The span at 168–207 (TSTTTDPATTSTPPASVDTTATNTQTPAVTAPAPAVDPQQ) shows a compositional bias: low complexity. Residues 208 to 218 (NAVVSPSQANV) show a composition bias toward polar residues. Over residues 219–235 (DTAATPAPTAATTPDGA) the composition is skewed to low complexity.

Belongs to the RodZ family.

It is found in the cell inner membrane. Its function is as follows. Cytoskeletal protein that is involved in cell-shape control through regulation of the length of the long axis. This Shigella boydii serotype 4 (strain Sb227) protein is Cytoskeleton protein RodZ.